We begin with the raw amino-acid sequence, 120 residues long: Ig heavy chain V region 36-65 (120 aa).

The region spanning 1-111 (VQLQQSGAEL…GGSYYFDYWG (111 aa)) is the Ig-like domain.

This chain is Ig heavy chain V region 36-65, found in Mus musculus (Mouse).